We begin with the raw amino-acid sequence, 626 residues long: Phosphomethylpyrimidine synthase (626 aa).

The interval 1-22 (MTKQEKAINLSESAQVDQQSVQ) is disordered. Residues 10–22 (LSESAQVDQQSVQ) are compositionally biased toward polar residues. Substrate is bound by residues asparagine 232, methionine 261, tyrosine 290, histidine 326, 346 to 348 (SRG), 387 to 390 (DGLR), and glutamate 426. Zn(2+) is bound at residue histidine 430. Tyrosine 453 provides a ligand contact to substrate. Residue histidine 494 coordinates Zn(2+). [4Fe-4S] cluster-binding residues include cysteine 574, cysteine 577, and cysteine 582.

The protein belongs to the ThiC family. Homodimer. Requires [4Fe-4S] cluster as cofactor.

It carries out the reaction 5-amino-1-(5-phospho-beta-D-ribosyl)imidazole + S-adenosyl-L-methionine = 4-amino-2-methyl-5-(phosphooxymethyl)pyrimidine + CO + 5'-deoxyadenosine + formate + L-methionine + 3 H(+). The protein operates within cofactor biosynthesis; thiamine diphosphate biosynthesis. Its function is as follows. Catalyzes the synthesis of the hydroxymethylpyrimidine phosphate (HMP-P) moiety of thiamine from aminoimidazole ribotide (AIR) in a radical S-adenosyl-L-methionine (SAM)-dependent reaction. The chain is Phosphomethylpyrimidine synthase from Pseudomonas putida (strain GB-1).